A 323-amino-acid chain; its full sequence is MTTYALVGDVGGTNARLALCAVATGEILQAKTYSGLEYESLEDVIKQYLSEHQAKVTDACIAIACPITGDWVAMTNHTWAFSIAAMQQNLGLDHLEVINDFTAVSMAIPVLPAQDVLQFGGTQPQPGKPVAVYGAGTGLGVAHLVNVDRRWISLAGEGGHVDFAPNSEEEDQILAVLRQELGHVSAERVLSGPGLVNLYRAIVISDARLPEKLAPKDITARALADSCTDCRRALSLFCVIMGRFGGNLALNLSTFGGVYIAGGIVPRFMEFFKASGFRAAFEDKGRFKDFLQDIPVYMITHPQPGLLGAGAYLRQKLGYELSS.

8–13 (GDVGGT) is a binding site for ATP.

The protein belongs to the bacterial glucokinase family.

The protein resides in the cytoplasm. The enzyme catalyses D-glucose + ATP = D-glucose 6-phosphate + ADP + H(+). This Yersinia pseudotuberculosis serotype I (strain IP32953) protein is Glucokinase.